Consider the following 484-residue polypeptide: Dual specificity protein kinase CLK1 (484 aa).

The disordered stretch occupies residues 1–42 (MRHSKRTYCPDWDDKDWDYGKWRSSSSHKRRKRSHSSAQENK). A compositionally biased stretch (basic residues) spans 26–35 (SSHKRRKRSH). The residue at position 61 (serine 61) is a Phosphoserine. Residues 79–146 (DYTQGCEPGH…RTRSVEDDEE (68 aa)) are disordered. A compositionally biased stretch (basic and acidic residues) spans 86–97 (PGHRQRDHESRY). Residues 100–112 (HSSKSSGRSGRSS) show a composition bias toward low complexity. Basic residues predominate over residues 113 to 138 (YKSKHRIHHSTSHRRSHGKSHRRKRT). Threonine 138 is modified (phosphothreonine). Serine 140 carries the post-translational modification Phosphoserine. The 317-residue stretch at 161 to 477 (YEIVDTLGEG…LREALKHPFF (317 aa)) folds into the Protein kinase domain. Residues 167–175 (LGEGAFGKV) and lysine 191 each bind ATP. Aspartate 288 acts as the Proton acceptor in catalysis.

This sequence belongs to the protein kinase superfamily. CMGC Ser/Thr protein kinase family. Lammer subfamily. In terms of assembly, interacts with PPIG and UBL5. Autophosphorylates on all three types of residues. As to expression, endothelial cells.

It localises to the nucleus. The enzyme catalyses L-seryl-[protein] + ATP = O-phospho-L-seryl-[protein] + ADP + H(+). The catalysed reaction is L-threonyl-[protein] + ATP = O-phospho-L-threonyl-[protein] + ADP + H(+). It catalyses the reaction L-tyrosyl-[protein] + ATP = O-phospho-L-tyrosyl-[protein] + ADP + H(+). Regulates splicing of its own pre-mRNA according to its kinase activity; increased expression of the catalytically active form influences splicing to generate the catalytically inactive splicing variant lacking the kinase domain. Leucettine L41 inhibits its kinase activity and affects the regulation of alternative splicing mediated by phosphorylation of SR proteins. Its function is as follows. Dual specificity kinase acting on both serine/threonine and tyrosine-containing substrates. Phosphorylates serine- and arginine-rich (SR) proteins of the spliceosomal complex and may be a constituent of a network of regulatory mechanisms that enable SR proteins to control RNA splicing. Phosphorylates: SRSF1, SRSF3 and PTPN1. Regulates the alternative splicing of tissue factor (F3) pre-mRNA in endothelial cells. The sequence is that of Dual specificity protein kinase CLK1 from Homo sapiens (Human).